Reading from the N-terminus, the 171-residue chain is Shikimate kinase (171 aa).

ATP is bound at residue 13–18; that stretch reads GVGKST. Mg(2+) is bound at residue Ser-17. Residues Asp-35, Arg-59, and Gly-81 each contribute to the substrate site. Residue Arg-118 participates in ATP binding. Arg-136 contributes to the substrate binding site. Arg-153 lines the ATP pocket.

This sequence belongs to the shikimate kinase family. As to quaternary structure, monomer. Mg(2+) serves as cofactor.

The protein localises to the cytoplasm. The enzyme catalyses shikimate + ATP = 3-phosphoshikimate + ADP + H(+). It functions in the pathway metabolic intermediate biosynthesis; chorismate biosynthesis; chorismate from D-erythrose 4-phosphate and phosphoenolpyruvate: step 5/7. In terms of biological role, catalyzes the specific phosphorylation of the 3-hydroxyl group of shikimic acid using ATP as a cosubstrate. The chain is Shikimate kinase from Streptomyces avermitilis (strain ATCC 31267 / DSM 46492 / JCM 5070 / NBRC 14893 / NCIMB 12804 / NRRL 8165 / MA-4680).